The chain runs to 310 residues: uncharacterized protein (310 aa).

Residues 1-11 (MKVKSILKHSR) are compositionally biased toward basic residues. Disordered regions lie at residues 1-227 (MKVK…SDHA) and 242-310 (AMEE…NENE). Residues 12–50 (MSSPSLETDSMESGQQQNMVSSTPSIDMNESDCSGTGTP) show a composition bias toward polar residues. Positions 51–80 (SEERIRRLRWDEENLSKAEQQKSAKMKITE) are enriched in basic and acidic residues. A compositionally biased stretch (acidic residues) spans 91–105 (PDDEVPEINLDETDS). Positions 110-121 (TAGTLGDTLGTL) are enriched in low complexity. 2 stretches are compositionally biased toward basic and acidic residues: residues 126-150 (VSKD…KKEP) and 182-195 (LPSK…ETKP). Over residues 242-253 (AMEEEALSEAEE) the composition is skewed to acidic residues. The span at 254-265 (NIPKKKPDFNEL) shows a compositional bias: basic and acidic residues. The residue at position 285 (S285) is a Phosphoserine. Residues 297-310 (DSGSASDVNMNENE) show a composition bias toward polar residues.

This is an uncharacterized protein from Schizosaccharomyces pombe (strain 972 / ATCC 24843) (Fission yeast).